Reading from the N-terminus, the 184-residue chain is MGLEEKLPSGFLLSTVESFAGYLRKGSVWPATFGLACCAIEMMATGAGRFDIARFGMEAFRASPRQADLMIVAGRVSQKMAPVLRQVYDQMAEPKWVLAMGVCASSGGMFNNYAVVQGVDHVVPVDIYLPGCPPRPEMLLNAILALHDKIQHTPLGVNRQEAVRAAEQAALAATPTIRMEGLLR.

Residues Cys37, Cys38, Cys103, and Cys132 each coordinate [4Fe-4S] cluster.

This sequence belongs to the complex I 20 kDa subunit family. As to quaternary structure, NDH-1 is composed of 14 different subunits. Subunits NuoB, C, D, E, F, and G constitute the peripheral sector of the complex. [4Fe-4S] cluster serves as cofactor.

It localises to the cell membrane. The enzyme catalyses a quinone + NADH + 5 H(+)(in) = a quinol + NAD(+) + 4 H(+)(out). In terms of biological role, NDH-1 shuttles electrons from NADH, via FMN and iron-sulfur (Fe-S) centers, to quinones in the respiratory chain. The immediate electron acceptor for the enzyme in this species is believed to be a menaquinone. Couples the redox reaction to proton translocation (for every two electrons transferred, four hydrogen ions are translocated across the cytoplasmic membrane), and thus conserves the redox energy in a proton gradient. In Nocardia farcinica (strain IFM 10152), this protein is NADH-quinone oxidoreductase subunit B.